The following is a 614-amino-acid chain: Leucine-rich repeat and immunoglobulin-like domain-containing nogo receptor-interacting protein 1 (614 aa).

Residues 1–35 (MLAGGVRSMPSPLLACWQPILLLVLGSVLSGSATG) form the signal peptide. Cystine bridges form between C36–C42 and C40–C51. An LRRNT domain is found at 36-65 (CPPRCECSAQDRAVLCHRKRFVAVPEGIPT). Residues 36–555 (CPPRCECSAQ…FDIKTLIIAT (520 aa)) are Extracellular-facing. LRR repeat units lie at residues 66 to 87 (ETRLLDLGKNRIKTLNQDEFAS), 90 to 111 (HLEELELNENIVSAVEPGAFNN), 114 to 135 (NLRTLGLRSNRLKLIPLGVFTG), 138 to 159 (NLTKLDISENKIVILLDYMFQD), 162 to 183 (NLKSLEVGDNDLVYISHRAFSG), 186 to 207 (SLEQLTLEKCNLTSIPTEALSH), 210 to 231 (GLIVLRLRHLNINAIRDYSFKR), 258 to 279 (NLTSLSITHCNLTAVPYLAVRH), 282 to 303 (YLRFLNLSYNPISTIEGSMLHE), 306 to 327 (RLQEIQLVGGQLAVVEPYAFRG), and 330 to 351 (YLRVLNVSGNQLTTLEESVFHS). Residue N138 is glycosylated (N-linked (GlcNAc...) asparagine). A glycan (N-linked (GlcNAc...) asparagine) is linked at N196. N-linked (GlcNAc...) asparagine glycans are attached at residues N258, N268, and N287. N-linked (GlcNAc...) asparagine glycosylation is present at N335. The LRRCT domain maps to 363–417 (NPLACDCRLLWVFRRRWRLNFNRQQPTCATPEFVQGKEFKDFPDVLLPNYFTCRR). Disulfide bonds link C367–C390, C369–C415, and C440–C491. The 103-residue stretch at 405 to 507 (PDVLLPNYFT…GNDSMPAHLH (103 aa)) folds into the Ig-like C2-type domain. N-linked (GlcNAc...) asparagine glycosylation is found at N486, N499, N520, and N536. The helical transmembrane segment at 556–576 (TMGFISFLGVVLFCLVLLFLW) threads the bilayer. Topologically, residues 577 to 614 (SRGKGNTKHNIEIEYVPRKSDAGISSADAPRKFNMKMI) are cytoplasmic. S596 bears the Phosphoserine mark.

Homotetramer. Forms a ternary complex with RTN4R/NGFR and RTN4R/TNFRSF19. Interacts with NGRF, RTN4R and MYT1L. Post-translationally, N-glycosylated. Contains predominantly high-mannose glycans.

The protein resides in the cell membrane. Functionally, functional component of the Nogo receptor signaling complex (RTN4R/NGFR) in RhoA activation responsible for some inhibition of axonal regeneration by myelin-associated factors. Is also an important negative regulator of oligodentrocyte differentiation and axonal myelination. Acts in conjunction with RTN4 and RTN4R in regulating neuronal precursor cell motility during cortical development. This chain is Leucine-rich repeat and immunoglobulin-like domain-containing nogo receptor-interacting protein 1 (LINGO1), found in Pongo abelii (Sumatran orangutan).